Reading from the N-terminus, the 207-residue chain is Small ribosomal subunit protein uS4c (207 aa).

The 62-residue stretch at 92 to 153 (MRLDNILFRL…PKIYQSIITK (62 aa)) folds into the S4 RNA-binding domain.

It belongs to the universal ribosomal protein uS4 family. As to quaternary structure, part of the 30S ribosomal subunit. Contacts protein S5. The interaction surface between S4 and S5 is involved in control of translational fidelity.

It localises to the plastid. It is found in the chloroplast. One of the primary rRNA binding proteins, it binds directly to 16S rRNA where it nucleates assembly of the body of the 30S subunit. Functionally, with S5 and S12 plays an important role in translational accuracy. The chain is Small ribosomal subunit protein uS4c (rps4) from Equisetum bogotense (Horsetail).